Reading from the N-terminus, the 158-residue chain is Transcription elongation factor GreA (158 aa).

Residues Ala45–Glu72 adopt a coiled-coil conformation.

This sequence belongs to the GreA/GreB family.

Necessary for efficient RNA polymerase transcription elongation past template-encoded arresting sites. The arresting sites in DNA have the property of trapping a certain fraction of elongating RNA polymerases that pass through, resulting in locked ternary complexes. Cleavage of the nascent transcript by cleavage factors such as GreA or GreB allows the resumption of elongation from the new 3'terminus. GreA releases sequences of 2 to 3 nucleotides. In Xylella fastidiosa (strain 9a5c), this protein is Transcription elongation factor GreA.